The chain runs to 88 residues: MSRSLRKGPFVDHHLLKKVRAMNIEEKKTPIKTWSRRSMITPEMIGHTFEVHNGKKFLTVFVSETMVGHKLGEFSPTRIFKSHPVKKG.

This sequence belongs to the universal ribosomal protein uS19 family.

In terms of biological role, protein S19 forms a complex with S13 that binds strongly to the 16S ribosomal RNA. This chain is Small ribosomal subunit protein uS19 (rpsS), found in Chlamydia pneumoniae (Chlamydophila pneumoniae).